A 1113-amino-acid polypeptide reads, in one-letter code: Atrial natriuretic peptide-converting enzyme (1113 aa).

Residues Met-1–Arg-112 are Cytoplasmic-facing. A helical; Signal-anchor for type II membrane protein transmembrane segment spans residues Phe-113–Leu-133. The Extracellular portion of the chain corresponds to Ser-134–Gly-1113. N-linked (GlcNAc...) asparagine glycosylation is found at Asn-147, Asn-202, and Asn-208. The segment at Ala-176–Asn-202 is disordered. The FZ 1 domain maps to Arg-201–Leu-327. 8 cysteine pairs are disulfide-bonded: Cys-206-Cys-266, Cys-214-Cys-259, Cys-250-Cys-290, Cys-279-Cys-324, Cys-283-Cys-307, Cys-337-Cys-350, Cys-345-Cys-363, and Cys-357-Cys-372. Residues Asn-298 and Asn-317 are each glycosylated (N-linked (GlcNAc...) asparagine). LDL-receptor class A domains follow at residues Leu-336 to Cys-372, Asn-373 to Cys-408, Asp-409 to Cys-445, and Ser-446 to Ser-483. Residue Asn-373 is glycosylated (N-linked (GlcNAc...) asparagine). 9 cysteine pairs are disulfide-bonded: Cys-374–Cys-386, Cys-381–Cys-399, Cys-393–Cys-408, Cys-410–Cys-423, Cys-418–Cys-436, Cys-430–Cys-445, Cys-447–Cys-460, Cys-455–Cys-473, and Cys-467–Cys-482. A glycan (N-linked (GlcNAc...) asparagine) is linked at Asn-411. Asn-444 is a glycosylation site (N-linked (GlcNAc...) asparagine). Asn-481, Asn-519, and Asn-537 each carry an N-linked (GlcNAc...) asparagine glycan. The 124-residue stretch at Ser-518–Pro-641 folds into the FZ 2 domain. Disulfide bonds link Cys-523–Cys-586, Cys-531–Cys-579, Cys-570–Cys-608, Cys-597–Cys-638, Cys-601–Cys-625, Cys-648–Cys-660, Cys-655–Cys-673, Cys-667–Cys-682, Cys-684–Cys-698, Cys-692–Cys-711, Cys-705–Cys-720, Cys-723–Cys-735, Cys-730–Cys-748, and Cys-742–Cys-757. Asn-635 carries N-linked (GlcNAc...) asparagine glycosylation. 3 consecutive LDL-receptor class A domains span residues Glu-647 to Cys-682, Gly-683 to Ser-721, and Phe-722 to Cys-757. Asn-719 carries N-linked (GlcNAc...) asparagine glycosylation. The 96-residue stretch at Val-758–Ser-853 folds into the SRCR domain. Residues Asn-765 and Asn-828 are each glycosylated (N-linked (GlcNAc...) asparagine). 6 disulfides stabilise this stretch: Cys-782–Cys-884, Cys-857–Cys-979, Cys-895–Cys-911, Cys-993–Cys-1058, Cys-1022–Cys-1037, and Cys-1048–Cys-1077. The region spanning Ile-869 to Tyr-1102 is the Peptidase S1 domain. Active-site charge relay system residues include His-910 and Asp-959. Asn-970 is a glycosylation site (N-linked (GlcNAc...) asparagine). Residue Ser-1052 is the Charge relay system of the active site. A glycan (N-linked (GlcNAc...) asparagine) is linked at Asn-1089.

It belongs to the peptidase S1 family. In terms of processing, N-glycosylated; required for processing and activation. Activated through proteolytic processing by a trypsin-like protease; cleaved into a N-terminal propeptide and an activated corin protease fragment. Atrial natriuretic peptide-converting enzyme, 180 kDa soluble fragment is produced by cleavage by ADAM10. Cleavage by ADAM10 to produce soluble 180 kDa soluble fragment takes place after the transmembrane region and before FZ 1. Post-translationally, a disulfide bond links the activated corin protease fragment and the N-terminal propeptide. The disulfide bond also links the activated corin protease fragment with Atrial natriuretic peptide-converting enzyme, 180 kDa soluble fragment. Highly expressed in heart. Also expressed in pregnant uterus.

It is found in the cell membrane. The protein resides in the secreted. Functionally, serine-type endopeptidase involved in atrial natriuretic peptide (NPPA) processing. Converts through proteolytic cleavage the non-functional propeptide NPPA into the active hormone, thereby regulating blood pressure in heart and promoting natriuresis, diuresis and vasodilation. Proteolytic cleavage of pro-NPPA also plays a role in female pregnancy by promoting trophoblast invasion and spiral artery remodeling in uterus. Also acts as a regulator of sodium reabsorption in kidney. May also process pro-NPPB the B-type natriuretic peptide. The polypeptide is Atrial natriuretic peptide-converting enzyme (Corin) (Mus musculus (Mouse)).